Here is a 291-residue protein sequence, read N- to C-terminus: m-AAA protease-interacting protein 1, mitochondrial (291 aa).

The transit peptide at 1-96 (MALAARLLPL…SLPASPSRSY (96 aa)) directs the protein to the mitochondrion.

As to quaternary structure, interacts with AFG3L2. Interacts with SPG7. Interacts with SMDT1/EMRE (via the N-terminal transit peptide); interaction is direct and takes place before maturation of SMDT1/EMRE.

It is found in the mitochondrion matrix. In terms of biological role, promotes sorting of SMDT1/EMRE in mitochondria by ensuring its maturation. Interacts with the transit peptide region of SMDT1/EMRE precursor protein in the mitochondrial matrix, leading to protect it against protein degradation by YME1L1, thereby ensuring SMDT1/EMRE maturation by the mitochondrial processing peptidase (PMPCA and PMPCB). The polypeptide is m-AAA protease-interacting protein 1, mitochondrial (Mus musculus (Mouse)).